Here is a 415-residue protein sequence, read N- to C-terminus: Gamma-glutamyl phosphate reductase (415 aa).

The protein belongs to the gamma-glutamyl phosphate reductase family.

Its subcellular location is the cytoplasm. The catalysed reaction is L-glutamate 5-semialdehyde + phosphate + NADP(+) = L-glutamyl 5-phosphate + NADPH + H(+). It functions in the pathway amino-acid biosynthesis; L-proline biosynthesis; L-glutamate 5-semialdehyde from L-glutamate: step 2/2. Catalyzes the NADPH-dependent reduction of L-glutamate 5-phosphate into L-glutamate 5-semialdehyde and phosphate. The product spontaneously undergoes cyclization to form 1-pyrroline-5-carboxylate. This Carboxydothermus hydrogenoformans (strain ATCC BAA-161 / DSM 6008 / Z-2901) protein is Gamma-glutamyl phosphate reductase.